The chain runs to 743 residues: MATKFPKFSQDLAQDPTTRRIWYAMATGNDFESHDGMTEENLYQKIFATHFGHVAIIFLWASSLLFHVAWQGNFEQWIKDPIHIRPIAHAIWDPQFGKPAIEAFTQGGANYPVNISYSGIYHWWYTIGMRTNNDLYMGAVFLLILASVFLFAGWLHLQPKFRPSLSWFKSAEPRLNHHLAGLFGVSSLAWAGHLIHVAIPESRGQHVGWNNFLSTLPHPAGLQPFFTGNWGVYASDPDTANHVFGTSQGAGTAILTFLGGFHPQTESLWLTDMAHHHLAIAVIFIIAGHMYRTNFGIGHSIKEMLNSKAGLVPGTNSEGQFNLPHQGLYDTYNNSLHFQLGIHLAALGTITSLVAQHMYAMPPYAFIAKDYTTQAALYTHHQYIAIFLMLGAFAHGAIFWVRDYDPEQNKGNVLDRVLKHKEAIISHLSWVSLFLGFHTLGLYVHNDVVVAFGTPEKQILIEPVFAQFIQASHGKVLYGLNVLLSNPDSVAYTAYPNYGNVWLQGWLDAINSGTNSLFLTIGPGDFLVHHAFALALHTTVLILVKGALDARGSKLMPDKKDFGYAFPCDGPGRGGTCDISAWDAFYLATFWALNTVGWVTFYWHWKHLGIWQGNVAQFNESSTYLMGWFRDYLWANSAQLINGYNPYGMNNLSVWAWMFLFGHLVWATGFMFLISWRGYWQELIETLVWAHERTPLANLVRWKDKPVALSIVQARLVGLTHFTVGYVLTYAAFLIASTAGKFG.

8 helical membrane-spanning segments follow: residues 46 to 69 (IFATHFGHVAIIFLWASSLLFHVA), 135 to 158 (LYMGAVFLLILASVFLFAGWLHLQ), 175 to 199 (LNHHLAGLFGVSSLAWAGHLIHVAI), 273 to 291 (MAHHHLAIAVIFIIAGHMY), 336 to 359 (LHFQLGIHLAALGTITSLVAQHMY), 375 to 401 (AALYTHHQYIAIFLMLGAFAHGAIFWV), 423 to 445 (AIISHLSWVSLFLGFHTLGLYVH), and 526 to 544 (FLVHHAFALALHTTVLILV). Residues Cys-568 and Cys-577 each contribute to the [4Fe-4S] cluster site. 2 helical membrane-spanning segments follow: residues 584–605 (AFYLATFWALNTVGWVTFYWHW) and 652–674 (LSVWAWMFLFGHLVWATGFMFLI). His-663, Met-671, and Tyr-679 together coordinate chlorophyll a. Trp-680 contacts phylloquinone. A helical membrane pass occupies residues 716–736 (LVGLTHFTVGYVLTYAAFLIA).

The protein belongs to the PsaA/PsaB family. The PsaA/B heterodimer binds the P700 chlorophyll special pair and subsequent electron acceptors. PSI consists of a core antenna complex that captures photons, and an electron transfer chain that converts photonic excitation into a charge separation. The cyanobacterial PSI reaction center is composed of one copy each of PsaA,B,C,D,E,F,I,J,K,L,M and X, and forms trimeric complexes. Requires PSI electron transfer chain: 5 chlorophyll a, 1 chlorophyll a', 2 phylloquinones and 3 4Fe-4S clusters. PSI core antenna: 90 chlorophyll a, 22 carotenoids, 3 phospholipids and 1 galactolipid. P700 is a chlorophyll a/chlorophyll a' dimer, A0 is one or more chlorophyll a, A1 is one or both phylloquinones and FX is a shared 4Fe-4S iron-sulfur center. as cofactor.

It is found in the cellular thylakoid membrane. The catalysed reaction is reduced [plastocyanin] + hnu + oxidized [2Fe-2S]-[ferredoxin] = oxidized [plastocyanin] + reduced [2Fe-2S]-[ferredoxin]. Functionally, psaA and PsaB bind P700, the primary electron donor of photosystem I (PSI), as well as the electron acceptors A0, A1 and FX. PSI is a plastocyanin/cytochrome c6-ferredoxin oxidoreductase, converting photonic excitation into a charge separation, which transfers an electron from the donor P700 chlorophyll pair to the spectroscopically characterized acceptors A0, A1, FX, FA and FB in turn. Oxidized P700 is reduced on the lumenal side of the thylakoid membrane by plastocyanin or cytochrome c6. In Mastigocladus laminosus (Fischerella sp.), this protein is Photosystem I P700 chlorophyll a apoprotein A2.